Reading from the N-terminus, the 155-residue chain is Large ribosomal subunit protein uL15 (155 aa).

The disordered stretch occupies residues 1–63 (MKLHELAPNP…QMPLTRRLPK (63 aa)). Composition is skewed to gly residues over residues 21 to 31 (RGIGSGLGKTS) and 42 to 52 (SGGGVRPGFEG).

It belongs to the universal ribosomal protein uL15 family. Part of the 50S ribosomal subunit.

Functionally, binds to the 23S rRNA. The sequence is that of Large ribosomal subunit protein uL15 from Symbiobacterium thermophilum (strain DSM 24528 / JCM 14929 / IAM 14863 / T).